Reading from the N-terminus, the 627-residue chain is Threonine--tRNA ligase (627 aa).

Residues 1-147 are editing domain; sequence MRMLLIHSDY…TIVPSGEAKA (147 aa). The catalytic stretch occupies residues 208-507; it reads PHVRIMLEQE…QSKGIKPMFP (300 aa). Zn(2+)-binding residues include cysteine 300, histidine 352, and histidine 476.

It belongs to the class-II aminoacyl-tRNA synthetase family. In terms of assembly, homodimer. Requires Zn(2+) as cofactor.

The protein localises to the cytoplasm. The catalysed reaction is tRNA(Thr) + L-threonine + ATP = L-threonyl-tRNA(Thr) + AMP + diphosphate + H(+). Its function is as follows. Catalyzes the attachment of threonine to tRNA(Thr) in a two-step reaction: L-threonine is first activated by ATP to form Thr-AMP and then transferred to the acceptor end of tRNA(Thr). Also edits incorrectly charged L-seryl-tRNA(Thr). The chain is Threonine--tRNA ligase from Thermococcus onnurineus (strain NA1).